Reading from the N-terminus, the 313-residue chain is Dimethyladenosine transferase (313 aa).

Residues 1–21 (MPKVKSGAIGRRRGRQEQRRE) are disordered. S-adenosyl-L-methionine is bound by residues His37, Leu39, Gly64, Glu85, Asp113, and Asn128.

Belongs to the class I-like SAM-binding methyltransferase superfamily. rRNA adenine N(6)-methyltransferase family. Part of the small subunit (SSU) processome, composed of more than 70 proteins and the RNA chaperone small nucleolar RNA (snoRNA) U3.

It localises to the nucleus. The protein resides in the nucleoplasm. The protein localises to the nucleolus. The catalysed reaction is adenosine(1779)/adenosine(1780) in 18S rRNA + 4 S-adenosyl-L-methionine = N(6)-dimethyladenosine(1779)/N(6)-dimethyladenosine(1780) in 18S rRNA + 4 S-adenosyl-L-homocysteine + 4 H(+). Functionally, specifically dimethylates two adjacent adenosines in the loop of a conserved hairpin near the 3'-end of 18S rRNA in the 40S particle. Involved in the pre-rRNA processing steps leading to small-subunit rRNA production independently of its RNA-modifying catalytic activity. Part of the small subunit (SSU) processome, first precursor of the small eukaryotic ribosomal subunit. During the assembly of the SSU processome in the nucleolus, many ribosome biogenesis factors, an RNA chaperone and ribosomal proteins associate with the nascent pre-rRNA and work in concert to generate RNA folding, modifications, rearrangements and cleavage as well as targeted degradation of pre-ribosomal RNA by the RNA exosome. This is Dimethyladenosine transferase (DIMT1) from Macaca fascicularis (Crab-eating macaque).